Consider the following 2624-residue polypeptide: Transcription factor TFIIIB component B'' homolog (2624 aa).

Residues 1–142 (MFRRARLSVK…TKEKQPCSDR (142 aa)) form a disordered region. Positions 1–299 (MFRRARLSVK…TYSSFRKNYY (299 aa)) are interaction with ZBTB43. Over residues 63–77 (PQEKAPRSSTEKTGG) the composition is skewed to basic and acidic residues. Over residues 99–119 (SSTSSLVKSSVSVPSESHPLS) the composition is skewed to low complexity. A compositionally biased stretch (polar residues) spans 120–132 (TINQEAPQPTATS). Over residues 133-142 (TKEKQPCSDR) the composition is skewed to basic and acidic residues. Positions 144–177 (RIYKAQKLREMLKEELRKEKKQWKNKYAINESQR) form a coiled coil. The segment at 193 to 241 (LPDNNPMTSSLEQEKKTEKPSTPVQTREQEGKSTPNAEDNEMEEETDDG) is disordered. A compositionally biased stretch (polar residues) spans 212–229 (PSTPVQTREQEGKSTPNA). Residues 230-240 (EDNEMEEETDD) show a composition bias toward acidic residues. The 51-residue stretch at 295–345 (RKNYYSKPWSNKETDMFFLAISMVGTDFSMIGQLFPHRARIEIKNKFKREE) folds into the Myb-like domain. Residues 355-470 (AFQEKRPFDF…QKKRRRKKQD (116 aa)) form a required for phosphorylation by CSNK2A1 region. 4 disordered regions span residues 379-449 (EKRK…SRED), 544-567 (LSLS…TSDL), 606-663 (ENVK…MNTL), and 729-759 (EEIG…SRKD). Residues 397–407 (TKPRKNVKVKK) show a composition bias toward basic residues. Over residues 552–565 (ATSVATESSESSTS) the composition is skewed to low complexity. Composition is skewed to basic and acidic residues over residues 637-663 (TESE…MNTL) and 736-759 (EKNE…SRKD). A 1; approximate repeat occupies 823 to 877 (GRREISSKEEVLEKILVSGEMAAALRETVRLDTSPKEMVPAEINTKEMQSDLKET). Positions 823 to 1327 (GRREISSKEE…PRENELEETS (505 aa)) are 9 X 55 AA repeats of G-R-R-X-I-S-P-X-E-N-G-X-E-E-V-K-P-X-X-E-M-E-T-D-L-K-X-T-G-R-E-X-X-X-R-E-K-T-X-E-X-X-D-A-X-E-E-I-D-X-D-L-E-E-T. Repeat copies occupy residues 878–932 (GRRA…LEEA), 933–987 (GRRE…LEET), 988–1040 (GRRK…LEET), 1041–1094 (EREV…LEET), 1095–1148 (EREI…LEET), and 1149–1203 (GRRE…LEET). Thr-915 is subject to Phosphothreonine. 2 stretches are compositionally biased toward basic and acidic residues: residues 930-957 (EEAG…ETDL) and 979-1006 (EIDK…KPVD). The segment at 930–1222 (EEAGRREISP…GPEEVKPVGK (293 aa)) is disordered. Positions 1030–1041 (DATEEIDLEETE) are enriched in acidic residues. Positions 1052–1079 (EEVKPLGEMETDLKATGRDSFPRGKTPE) are enriched in basic and acidic residues. Positions 1078–1103 (PEVIDAIEEIEIDLEETEREISPQEN) form a coiled coil. Residues 1082-1095 (DAIEEIEIDLEETE) are compositionally biased toward acidic residues. Residues 1120 to 1133 (ATGREISPREKTPE) show a composition bias toward basic and acidic residues. Residues 1136 to 1145 (DATEEIDKDL) show a composition bias toward acidic residues. The segment covering 1161–1190 (EEVKPVDEMETDLKTTGREGSSREKTREVI) has biased composition (basic and acidic residues). The span at 1194-1204 (EVIETDLEETE) shows a compositional bias: acidic residues. An 8; approximate repeat occupies 1204 to 1257 (EREISPQENGPEEVKPVGKMETDLKEIREEISQREKVLAEFSAIREKEIDLKET). The stretch at 1223 to 1284 (METDLKEIRE…VEEMEADLKE (62 aa)) forms a coiled coil. One copy of the 9; approximate repeat lies at 1258–1327 (GKRDIPIMEK…PRENELEETS (70 aa)). Over residues 1306–1321 (AELKQTGKTDISPREN) the composition is skewed to basic and acidic residues. Disordered regions lie at residues 1306–1348 (AELK…SAVP), 1365–1440 (TPVE…RFKR), 1519–1543 (TERN…VQKN), 1684–1722 (KAKP…LQKG), 1819–1863 (STSE…ASKA), 2130–2164 (GAEM…ENKD), 2181–2200 (SEVN…QEVH), 2207–2241 (VASS…GDSV), 2444–2501 (FQSR…SRPG), and 2519–2566 (SDEP…PSPS). Positions 1326–1344 (TSTSRQTDTHLMQSGSNDF) are enriched in polar residues. Positions 1366–1378 (PVEEKRNSEKEVS) are enriched in basic and acidic residues. 3 stretches are compositionally biased toward polar residues: residues 1379-1390 (SHFSHFKISSQT), 1411-1421 (SDINLSKSLPQ), and 1519-1529 (TERNLSPSNSC). The span at 1695 to 1719 (KKEEPVLEKVTTDQSKEGKPEDHLL) shows a compositional bias: basic and acidic residues. Residues 1844–1853 (RGSKRVRGKT) show a composition bias toward basic residues. Basic and acidic residues predominate over residues 2131–2151 (AEMETQRETEKNASKATELEN). Basic and acidic residues predominate over residues 2470–2479 (VSDKEERTDA). The span at 2488–2498 (SRTSSSKASLS) shows a compositional bias: low complexity. Residues 2526-2544 (HSKKRLKPLIPGLRKKLKR) are compositionally biased toward basic residues.

In terms of assembly, component of TFIIIB complex. The TFIIIB complex has two activities, alpha and beta. The TFIIIB-alpha and TFIIIB-beta activities are required for transcription of genes with TFIIIC-bound internal promoters and PSE transcription factor-bound external promoters, respectively. The TFIIIB-alpha activity complex is composed of TBP, BDP1, and a complex containing both BRF2 and at least four stably associated proteins; YY1 facilitates the formation of TFIIIB-alpha activity complex. The TFIIIB-beta activity complex is composed of TBP, BDP1, and BRF1. Interacts with BRF1; this interaction diminishes during mitosis resulting in the release of BDP1 from chromosomal templates. Component of TFIIIC complex. The TFIIIC complex has two activities, C1 and C2. The TFIIIC2 activity complex is only required for transcription of the 'classical' pol III genes whereas the TFIIIC1 activity complex is required for transcription of all pol III genes. The TFIIIC1 activity complex is composed at least of BDP1. Interacts with ZBTB43. In terms of processing, phosphorylated by CSNK2A1 during mitosis, resulting in its release from chromatin and suppression of polymerase III transcription. As to expression, isoform 2 is highly expressed in cerebellum.

Its subcellular location is the nucleus. In terms of biological role, general activator of RNA polymerase III transcription. Requires for transcription from all three types of polymerase III promoters. Requires for transcription of genes with internal promoter elements and with promoter elements upstream of the initiation site. The protein is Transcription factor TFIIIB component B'' homolog (BDP1) of Homo sapiens (Human).